The chain runs to 444 residues: ATP-dependent RNA helicase SrmB (444 aa).

Positions 4-32 (TTFSELELDESLLEALQDKGFTRPTAIQA) match the Q motif motif. Residues 35–209 (IPPALDGRDV…AERLLEDPVE (175 aa)) form the Helicase ATP-binding domain. 48 to 55 (APTGTGKT) contributes to the ATP binding site. A DEAD box motif is present at residues 157–160 (DEAD). Residues 238-387 (LLVHLLKQPE…ELRPKTRAPS (150 aa)) form the Helicase C-terminal domain. Over residues 382–391 (KTRAPSEKQT) the composition is skewed to basic and acidic residues. The segment at 382–444 (KTRAPSEKQT…TGVPPQTTEE (63 aa)) is disordered. Composition is skewed to basic residues over residues 394-406 (PSKK…AEKK) and 414-432 (PRVK…RRKP).

It belongs to the DEAD box helicase family. SrmB subfamily. Interacts with the 50S ribosomal subunit. Forms a complex with the 50S ribosomal proteins L4 and L24, and a region near the 5'-end of 23S rRNA.

The protein resides in the cytoplasm. It carries out the reaction ATP + H2O = ADP + phosphate + H(+). In terms of biological role, DEAD-box RNA helicase involved in the assembly of the 50S ribosomal subunit at low temperature. Exhibits RNA-stimulated ATP hydrolysis and RNA unwinding activity. Acts before DeaD. This is ATP-dependent RNA helicase SrmB from Escherichia coli (strain K12).